The primary structure comprises 194 residues: MKIWTSEHVFDHPWETVTTAAMQKYPNPMNPSVVGVDVLDRHIDPSGKLHSHRLLSTEWGLPSIVKSIIGAARTKTYVQEHSVVDPVEKTMELKSTNISFTNMVSVDERLIYKPHPQDPEKTILTQEAIITVKGVSLGSYLEGLMASTISSNANKGREAMEWVIHKLNAEIEELTASARGSIRTPMAAAAFVEK.

The PRELI/MSF1 domain occupies methionine 1–glutamate 172. Phosphoserine is present on residues serine 46 and serine 51.

This sequence belongs to the slowmo family.

This chain is PRELI domain containing protein 3B (PRELID3B), found in Bos taurus (Bovine).